We begin with the raw amino-acid sequence, 314 residues long: tRNA dimethylallyltransferase 2 (314 aa).

8-15 (GPTGTGKS) contacts ATP. 10 to 15 (TGTGKS) is a binding site for substrate.

Belongs to the IPP transferase family. In terms of assembly, monomer. It depends on Mg(2+) as a cofactor.

It carries out the reaction adenosine(37) in tRNA + dimethylallyl diphosphate = N(6)-dimethylallyladenosine(37) in tRNA + diphosphate. Functionally, catalyzes the transfer of a dimethylallyl group onto the adenine at position 37 in tRNAs that read codons beginning with uridine, leading to the formation of N6-(dimethylallyl)adenosine (i(6)A). The protein is tRNA dimethylallyltransferase 2 of Mycobacterium ulcerans (strain Agy99).